We begin with the raw amino-acid sequence, 272 residues long: MFDLTGKHVCYVADCGGIALETSKVLMTKNIAKLAILQSTENPQAIAQLQSIKPSTQIFFWTYDVTMAREDMKKYFDEVMVQMDYIDVLINGATLCDENNIDATINTNLTGMMNTVATVLPYMDRKMGGTGGLIVNVTSVIGLDPSPVFCAYSASKFGVIGFTRSLADPLYYSQNGVAVMAVCCGPTRVFVDRELKAFLEYGQSFADRLRRAPCQSTSVCGQNIVNAIERSENGQIWIADKGGLELVKLHWYWHMADQFVHYMQSNDEEDQD.

11 to 34 (YVADCGGIALETSKVLMTKNIAKL) serves as a coordination point for NAD(+). S139 is a binding site for substrate. The active-site Proton acceptor is the Y152.

This sequence belongs to the short-chain dehydrogenases/reductases (SDR) family.

The polypeptide is Alcohol dehydrogenase-related 31 kDa protein (Adhr) (Drosophila melanogaster (Fruit fly)).